Consider the following 156-residue polypeptide: Small ribosomal subunit protein uS7 (156 aa).

The protein belongs to the universal ribosomal protein uS7 family. In terms of assembly, part of the 30S ribosomal subunit. Contacts proteins S9 and S11.

Functionally, one of the primary rRNA binding proteins, it binds directly to 16S rRNA where it nucleates assembly of the head domain of the 30S subunit. Is located at the subunit interface close to the decoding center, probably blocks exit of the E-site tRNA. The chain is Small ribosomal subunit protein uS7 from Geobacter sp. (strain M21).